We begin with the raw amino-acid sequence, 263 residues long: Pyrrolysine synthase (263 aa).

L-pyrrolysine contacts are provided by Leu8, Val57, Ile64, and Ala107. 7 residues coordinate NAD(+): Lys155, Val156, Asp175, Cys210, Pro228, Ile230, and Glu249.

Belongs to the PylD family.

It catalyses the reaction (3R)-3-methyl-D-ornithyl-N(6)-L-lysine + NAD(+) = L-pyrrolysine + NH4(+) + NADH + 2 H(+). The protein operates within amino-acid biosynthesis; L-pyrrolysine biosynthesis. Functionally, catalyzes the ultimate step of the pyrrolysine biosynthesis pathway by converting the isopeptide (3R)-3-methyl-D-ornithyl-N(6)-L-lysine to the 22nd proteinogenic amino acid. Is able to use surrogate substrates such as (3R)-D-ornithyl-N(6)-L-lysine in vitro. The protein is Pyrrolysine synthase of Methanosarcina barkeri (strain Fusaro / DSM 804).